We begin with the raw amino-acid sequence, 578 residues long: Ribonuclease SLFN12 (578 aa).

Ser-368 bears the Phosphoserine mark. The mediates interaction with PDE3A stretch occupies residues 551-560 (AENLYQIIGI). Ser-573 bears the Phosphoserine mark.

Belongs to the Schlafen family. Subgroup II subfamily. As to quaternary structure, homodimer. Interacts with PDE3A; direct low affinity interaction which is stimulated by binding of 17beta-estradiol/E2 to PDE3A and that positively regulates the ribonuclease activity of SLFN12. Interacts with SERPINB12; as part of a pathway regulating cell differentiation. Phosphorylation at Ser-368 and Ser-573 negatively regulates the ribonuclease activity. Dephosphorylation is induced by the interaction with PDE3A and stimulates the rRNA ribonuclease activity.

The protein localises to the nucleus. It is found in the cytoplasm. The protein resides in the cytosol. Functionally, ribonuclease which is part of an E2/17beta-estradiol-induced pro-apoptotic signaling pathway. E2 stabilizes the PDE3A/SLFN12 complex in the cytosol, promoting the dephosphorylation of SLFN12 and activating its pro-apoptotic ribosomal RNA/rRNA ribonuclease activity. This apoptotic pathway might be relevant in tissues with high concentration of E2 and be for instance involved in placenta remodeling. May play a role in cell differentiation. This is Ribonuclease SLFN12 from Homo sapiens (Human).